A 467-amino-acid polypeptide reads, in one-letter code: Glutamate--tRNA ligase (467 aa).

Residues 9–19 (PSPTGYLHIGG) carry the 'HIGH' region motif. Residues 237-241 (KLSKR) carry the 'KMSKS' region motif. K240 is a binding site for ATP.

Belongs to the class-I aminoacyl-tRNA synthetase family. Glutamate--tRNA ligase type 1 subfamily. As to quaternary structure, monomer.

The protein localises to the cytoplasm. The enzyme catalyses tRNA(Glu) + L-glutamate + ATP = L-glutamyl-tRNA(Glu) + AMP + diphosphate. Its function is as follows. Catalyzes the attachment of glutamate to tRNA(Glu) in a two-step reaction: glutamate is first activated by ATP to form Glu-AMP and then transferred to the acceptor end of tRNA(Glu). In Xanthomonas oryzae pv. oryzae (strain MAFF 311018), this protein is Glutamate--tRNA ligase.